The sequence spans 903 residues: MITKLLTKVIGSRNDRTLRRLRKIVKEINNYEPAFEALSDEELKAKTVEFRQRIEQGENLDQLLPEAFATVREASKRVFGMRHFDVQLIGGMVLHGGQIAEMRTGEGKTLTATLAAYLNALPGKGVHIVTVNDYLAKRDAETNRPLFEFLGMTVGVNIPNMPQPAKKEAYQADILYGTNNEFGFDYLRDNMAFRPEDRVQRARFFAVVDEVDSILIDEARTPLIISGPAEDSSDLYIRINKLIPLLQKQDKEDSEEYRGDGHFTVDEKSKQVHLTETGQEFVEELLVKNGMMQEGDTLYSPANISLLHHVNAALRAHVLFEKNVDYIVTPDGEVVIVDEHTGRTMPGRRWSDGLHQAVEAKEGVKIQNENQTLASITFQNYFRLYEKLSGMTGTADTEAFEFQQIYGLETVVIPTNKPMVRNDMPDVVYRSEAEKFAAIIEDIKQRVEKGQPVLVGTVSIEKSELLSNALKKAGIKHNVLNAKFHEKEAEIVAEAGKPGAVTIATNMAGRGTDIVLGGSWQAKVEKLDNPTQEQIDAIKAEWKQVHDQVLQAGGLHIIGTERHESRRIDNQLRGRSGRQGDAGSSRFYLSMEDTLLRIFTSDRMAALIQSGMDEGEAIESKMLSRSIEKAQRKVEGRNFDIRKQLLEYDDVANDQRKVVYELRDELMSADDISDMIAQNREDVLNAVMDEYIPPQSLEDMWDIKGLEDRLKNDFDLPLPIQSWLDADNKLYEEALRERIIEQAVEVYKAKEQAVSPAVMRNFEKSVMLQTLDTLWKEHLAAMDHLRQGIHLRGYAQKNPKQEYKRESFELFEDLLESLKSDVITVLSKVRVQQQEEVERMEAQRRAQAEEAARHAQAQHASADDAEQDESNQPMVRDERKVGRNEPCPCGSGKKYKQCHGQIN.

ATP-binding positions include Q87, 105–109 (GEGKT), and D513. Positions 840–853 (MEAQRRAQAEEAAR) are enriched in basic and acidic residues. The interval 840–903 (MEAQRRAQAE…KYKQCHGQIN (64 aa)) is disordered. Residues C887, C889, C898, and H899 each contribute to the Zn(2+) site.

Belongs to the SecA family. As to quaternary structure, monomer and homodimer. Part of the essential Sec protein translocation apparatus which comprises SecA, SecYEG and auxiliary proteins SecDF-YajC and YidC. The cofactor is Zn(2+).

The protein resides in the cell inner membrane. It is found in the cytoplasm. It catalyses the reaction ATP + H2O + cellular proteinSide 1 = ADP + phosphate + cellular proteinSide 2.. Functionally, part of the Sec protein translocase complex. Interacts with the SecYEG preprotein conducting channel. Has a central role in coupling the hydrolysis of ATP to the transfer of proteins into and across the cell membrane, serving both as a receptor for the preprotein-SecB complex and as an ATP-driven molecular motor driving the stepwise translocation of polypeptide chains across the membrane. The protein is Protein translocase subunit SecA of Vibrio cholerae serotype O1 (strain M66-2).